Reading from the N-terminus, the 95-residue chain is uncharacterized protein (95 aa).

A helical transmembrane segment spans residues 12–32 (IASLVVSVVVLLIGLILWFFI).

It is found in the cell membrane. This is an uncharacterized protein from Escherichia coli O6:H1 (strain CFT073 / ATCC 700928 / UPEC).